The primary structure comprises 887 residues: Transportin-2 (887 aa).

20 HEAT repeats span residues 9 to 36 (GLQQ…DKLK), 41 to 79 (FPDF…AHYQ), 88 to 121 (FIKQ…KGEL), 127 to 164 (LLPQ…LDSD), 171 to 201 (NIMI…QFIM), 214 to 241 (FIEH…VMLL), 253 to 280 (HSII…FWLT), 296 to 386 (VQLI…LANV), 394 to 422 (HLLP…GAIA), 434 to 461 (PELI…TLSR), 475 to 508 (LKPL…EEEA), 516 to 549 (LSYI…ADSV), 557 to 595 (EYIQ…TALQ), 603 to 654 (EPVY…GLGG), 665 to 696 (IMTL…KACF), 704 to 737 (AEFM…MQMG), 745 to 780 (QMVL…YVCP), 788 to 821 (QQFI…IGVN), 830 to 861 (IFFC…KDQV), and 864 to 884 (ENWQ…LAAF). Residues 31 to 99 (VQDKLKQLNQ…KQECLNNIGD (69 aa)) form the Importin N-terminal domain. The interval 344 to 363 (TLTHEAERPDSSEDAEDDDD) is disordered. Lysine 852 is modified (N6-acetyllysine).

This sequence belongs to the importin beta family. Importin beta-2 subfamily.

The protein localises to the cytoplasm. The protein resides in the nucleus. In terms of biological role, probably functions in nuclear protein import as nuclear transport receptor. Serves as receptor for nuclear localization signals (NLS) in cargo substrates. Is thought to mediate docking of the importin/substrate complex to the nuclear pore complex (NPC) through binding to nucleoporin and the complex is subsequently translocated through the pore by an energy requiring, Ran-dependent mechanism. At the nucleoplasmic side of the NPC, Ran binds to the importin, the importin/substrate complex dissociates and importin is re-exported from the nucleus to the cytoplasm where GTP hydrolysis releases Ran. The directionality of nuclear import is thought to be conferred by an asymmetric distribution of the GTP- and GDP-bound forms of Ran between the cytoplasm and nucleus. The chain is Transportin-2 (Tnpo2) from Mus musculus (Mouse).